A 282-amino-acid chain; its full sequence is HTH-type transcriptional activator RhaR (282 aa).

The region spanning 179 to 277 (DKLITALANS…GMTPSQWRHL (99 aa)) is the HTH araC/xylS-type domain. 2 DNA-binding regions (H-T-H motif) span residues 196–217 (DAFC…RAQT) and 244–267 (VSEI…TRET).

Binds DNA as a dimer.

It is found in the cytoplasm. In terms of biological role, activates expression of the rhaSR operon in response to L-rhamnose. The polypeptide is HTH-type transcriptional activator RhaR (Salmonella typhi).